We begin with the raw amino-acid sequence, 364 residues long: Phosphoserine aminotransferase (364 aa).

Position 41 (Arg41) interacts with L-glutamate. Residues 75-76 (AS), Trp100, Thr155, and Gln198 contribute to the pyridoxal 5'-phosphate site. Lys199 is subject to N6-(pyridoxal phosphate)lysine. 239–240 (NT) is a binding site for pyridoxal 5'-phosphate.

It belongs to the class-V pyridoxal-phosphate-dependent aminotransferase family. SerC subfamily. As to quaternary structure, homodimer. Requires pyridoxal 5'-phosphate as cofactor.

Its subcellular location is the cytoplasm. The enzyme catalyses O-phospho-L-serine + 2-oxoglutarate = 3-phosphooxypyruvate + L-glutamate. It catalyses the reaction 4-(phosphooxy)-L-threonine + 2-oxoglutarate = (R)-3-hydroxy-2-oxo-4-phosphooxybutanoate + L-glutamate. It functions in the pathway amino-acid biosynthesis; L-serine biosynthesis; L-serine from 3-phospho-D-glycerate: step 2/3. Its function is as follows. Catalyzes the reversible conversion of 3-phosphohydroxypyruvate to phosphoserine and of 3-hydroxy-2-oxo-4-phosphonooxybutanoate to phosphohydroxythreonine. The chain is Phosphoserine aminotransferase from Streptococcus thermophilus (strain ATCC BAA-250 / LMG 18311).